A 648-amino-acid chain; its full sequence is Macrolide export ATP-binding/permease protein MacB (648 aa).

One can recognise an ABC transporter domain in the interval 5–243; it reads LELKDIRRSY…AGGTEPVVNT (239 aa). 41 to 48 is an ATP binding site; the sequence is GASGSGKS. 4 helical membrane-spanning segments follow: residues 273-293, 523-543, 576-596, and 600-620; these read LLTM…VVVG, LFLT…VMNI, AVLV…LIAF, and LFLP…AFLC.

Belongs to the ABC transporter superfamily. Macrolide exporter (TC 3.A.1.122) family. As to quaternary structure, homodimer. Part of the tripartite efflux system MacAB-TolC, which is composed of an inner membrane transporter, MacB, a periplasmic membrane fusion protein, MacA, and an outer membrane component, TolC. The complex forms a large protein conduit and can translocate molecules across both the inner and outer membranes. Interacts with MacA.

It localises to the cell inner membrane. Part of the tripartite efflux system MacAB-TolC. MacB is a non-canonical ABC transporter that contains transmembrane domains (TMD), which form a pore in the inner membrane, and an ATP-binding domain (NBD), which is responsible for energy generation. Confers resistance against macrolides. This Shigella sonnei (strain Ss046) protein is Macrolide export ATP-binding/permease protein MacB.